Here is a 439-residue protein sequence, read N- to C-terminus: Transcriptional enhancer factor TEF-5 (439 aa).

The segment covering 1 to 12 has biased composition (polar residues); the sequence is MASNSWTANSSP. The tract at residues 1 to 34 is disordered; that stretch reads MASNSWTANSSPGEAREDGSEGLDKGLDNDAEGV. Ala-2 carries the post-translational modification N-acetylalanine. The segment covering 14-28 has biased composition (basic and acidic residues); the sequence is EAREDGSEGLDKGLD. Residues 28-104 constitute a DNA-binding region (TEA); the sequence is DNDAEGVWSP…QVLARKKVRE (77 aa). Ser-148 carries the phosphoserine modification. Residues 173-439 are transcriptional activation; the sequence is GPSQDIKPFA…QHHVYKLVKD (267 aa).

As to quaternary structure, interacts with YAP1 and WWTR1/TAZ. In terms of tissue distribution, expressed in embryos as well as in many adult tissues.

The protein localises to the nucleus. Its function is as follows. Transcription factor which plays a key role in the Hippo signaling pathway, a pathway involved in organ size control and tumor suppression by restricting proliferation and promoting apoptosis. The core of this pathway is composed of a kinase cascade wherein MST1/MST2, in complex with its regulatory protein SAV1, phosphorylates and activates LATS1/2 in complex with its regulatory protein MOB1, which in turn phosphorylates and inactivates YAP1 oncoprotein and WWTR1/TAZ. Acts by mediating gene expression of YAP1 and WWTR1/TAZ, thereby regulating cell proliferation, migration and epithelial mesenchymal transition (EMT) induction. This is Transcriptional enhancer factor TEF-5 (Tead3) from Mus musculus (Mouse).